A 141-amino-acid chain; its full sequence is Nucleoside diphosphate kinase (141 aa).

Positions 11, 59, 87, 93, 104, and 114 each coordinate ATP. Catalysis depends on His117, which acts as the Pros-phosphohistidine intermediate.

The protein belongs to the NDK family. In terms of assembly, homotetramer. Mg(2+) serves as cofactor.

The protein resides in the cytoplasm. The catalysed reaction is a 2'-deoxyribonucleoside 5'-diphosphate + ATP = a 2'-deoxyribonucleoside 5'-triphosphate + ADP. It catalyses the reaction a ribonucleoside 5'-diphosphate + ATP = a ribonucleoside 5'-triphosphate + ADP. Functionally, major role in the synthesis of nucleoside triphosphates other than ATP. The ATP gamma phosphate is transferred to the NDP beta phosphate via a ping-pong mechanism, using a phosphorylated active-site intermediate. This is Nucleoside diphosphate kinase from Xylella fastidiosa (strain 9a5c).